A 2381-amino-acid chain; its full sequence is MKTKAHNEDEDEEIDIMNNSDGDSDDDQPSKSSSKVSQSSSKNKRKTSSSKSTNSTIEESIPQTIPAPLSTTITPPTLTMNTSNNFETEEQRKYRLQSESLAQDTASLFDEIQDELDDGFRSLLSGIDITTLPNYSIDNTNNRSIIASSSGTVNNSNNNNNNDGGISEERKRLTASAPTIPTTTLPASLPVNLSSSTSSTNILSGTASPKKRKSKDENTTINEQENVNNINSGNVKNSKNNSGSSISSSISSSSSSGSSSSKSKKSKKSKNEENSEGFVIAEDENDHKSSSNKSNSKKSSSNKSKSPSNKNNNKKLPQSRSIINSKKSTESEYDSSDSSDMDLDVNISDCDSDIEFPSFTSQTTKPNNSNSNNNNNNNSINSTIPASNNINSANNSKTTNKNITSNKKDNKVIYNDDGSDSETPILTSVKIQREQQIPQQQQQQQQQQHPQQHPQQQQTQNNNNNNNNNNNNNNNNNNNNNNNNNININNNNNNNQAFSSLISSHTAHIYPEPHFHSLSFLAPFSPLGLPIASPMSPGLLDLVSLPNSCSVPPLSPLSPLSPLLSPVSPSFNANNKHNNNSLTNKNIDATMITSIAPIMDKTSTITITPISTTDDVSNNISIISNNGNNLIANNENVTNININNNNNNNNNNNNNNNNNNNNNNNNNNNNNNNNNNNNNNNNNNNNNNNNNNGDEMSIEFSTITSGITGSGEAGSNNSNINSGVINTSTSISTPTIIPTPTPTTTIATTTTTTTESINQPSIFSNHISVFSNLLPTVIPSANIELDDIMNIQSSSSLSINSPISSQSSQSIIFSPISSGSNVISNNSINNNNNNAKKSKRFSMNPNVQKHFQPTIWHEEEKLLFRELFCAYGRDWQMVSTLMCGTKSPTQIKNFYYDVRVTLLAPFFGVSGDGETKSRIMLPEMEKDIIISKPEQNVNSNNNNNGGGNSLKDGSNGKRFQSSLSSSNGNVGGSGSGDDDVRVKKKSRTASKRSFRFSRIANETNRTPKNQPKPSKNKVLPETPPNVKYPVGSALFYFYTNPETCPVGKWFEVKILEWDNNAQVPVSMINQSSNSSPVNNNNSNNNNNNNNINPLENMEISFTELNNGIDSSMVDFTAGLDLDLLGSANDSMDLNTDVKIQQTITTSSTTTTTSTPVSSSSSSSSSSSSSSSSSSTTTATATTTGSAKSKKEKENVNNNNNNNLSNQETTIGTKYKAVMFNMNKTKGFWVFENELKEEMEIGQEIWEFSADPNAEEEMITISSSNSNSSSNLSSSLNNTIILLSTPTPPPMPIPVSTTTIAPPILSTTTPTQQQFQQLQPTQQLQQLPPPPPPPPKPPIDNTITVSSPVDLTIPLIENQMIVGGNGNCFVNCIMGENRPNGIQTQDLVIKLVESLYVTTDKFKIQQYLEQKLENTTAPNTKFPYYPFPSSTTTNSATSTPTSTPTSTPSTSASTLTPTSTPTSTPVPAPTSLSTPTLTSPVLETTTIIPSDNKEKDIKDGIYSISNIISSELLEIPTFSIEFISSGSLSIVSKQKCFFEAISNSFEEREIVSINFNSIFNTYQFISNINDKAFIIQLFDNILKASDISVQKIIGDKPPPATITPILPPKTEVTQTTPPSSSSSSSSSSSSSSSSSSSSTTKNNSTTIVNNTDSTKFVDVKKEQLTTVPIVKQESNSPSKTLPPSNSPSKTLPLSNSPSKTLLPSNSSIPNKSTPSPIPKPTTSSTTYPVTTSNPSSKPQTPIPTSNKSPAKSNTTTTPATTTSNTSITPTPKPLTQTTTSTSNPNNLTQPTTSNSNPNNLTQPTNTTLKPSLPNQNTTTTITTTKPMVSAPTNSTNQNTIPNATTKPPPVVNKLPANPPLKLTPPPNSKIPAILATTTASRAPAPPIPNGGLVPNLIIKPASSSSIIKQPAGNISTPSATNFKPNPTPNAKPLAGNTSIPSTTYKQPATGVSNTSTITQATTTVPGTTTTTNPNGSIPPKPSNGLAVPSKTTTTIVNGQTVVTTTPINPNLSKPKIIMINGQKLYACTCCLSKNPPGTVIPPQYISKPVSKLSTTTSTVGGKPVANNMTTTTTSSTSTTMTTPTSTNTTTNGTPQQSTKSMINNGLTPGSNYKTAAIIHPKPLSGIPGGNTLSGKSPTPLTIKPPSGLIPGKMPPSLSSSSANPISITNNTTSLSQQSNTTNTMPSTVSLSSGSTSINSNSSNSKSLRSPKSSDNDGKESKKERKEKNLDKESGKSDRETKSEKNENRKKDKNHDKDSKSDKNHDKSDKNNNDKFDSNKNDNGAIVTSPFNLLFNPDKSPIPYKLFIGKRELLLECRRLLRIQCSRISELNKQNIESGKDTTEVISKMKDLISELSSFKFLLLDIASERYKLYKKSIGIYDF.

Disordered stretches follow at residues 1-85 (MKTK…TSNN), 148-167 (SSSG…GGIS), 178-492 (PTIP…NNNN), and 641-696 (NINN…GDEM). Low complexity-rich tracts occupy residues 30 to 41 (SKSSSKVSQSSS) and 64 to 79 (TIPA…PTLT). Composition is skewed to low complexity over residues 192–204 (NLSS…NILS), 225–261 (ENVN…SSSS), and 291–315 (SNKS…NNKK). Residues 331–343 (SEYDSSDSSDMDL) show a composition bias toward acidic residues. Positions 363–405 (TTKPNNSNSNNNNNNNSINSTIPASNNINSANNSKTTNKNITS) are enriched in low complexity. Residues 421-430 (SETPILTSVK) are compositionally biased toward polar residues. Composition is skewed to low complexity over residues 435–492 (QQIP…NNNN) and 641–692 (NINN…NNNN). Residues 856–899 (WHEEEKLLFRELFCAYGRDWQMVSTLMCGTKSPTQIKNFYYDVR) enclose the Myb-like domain. Disordered regions lie at residues 932 to 1024 (KPEQ…ETPP), 1068 to 1093 (INQS…NINP), 1145 to 1207 (TSST…SNQE), 1295 to 1339 (STTT…PPID), 1422 to 1474 (PYYP…LSTP), 1597 to 1647 (PPAT…TTIV), 1667 to 1849 (PIVK…PPPV), 1961 to 1985 (TTVP…NGLA), 2055 to 2106 (TSTV…NGLT), and 2122 to 2280 (LSGI…NKND). The span at 936 to 953 (NVNSNNNNNGGGNSLKDG) shows a compositional bias: low complexity. Over residues 982–995 (VKKKSRTASKRSFR) the composition is skewed to basic residues. Residues 1000 to 1013 (ANETNRTPKNQPKP) show a composition bias toward polar residues. Composition is skewed to low complexity over residues 1069–1092 (NQSS…NNIN), 1145–1186 (TSST…TGSA), 1195–1205 (VNNNNNNNLSN), and 1306–1325 (TTTP…QLQQ). Residues 1326-1337 (LPPPPPPPPKPP) are compositionally biased toward pro residues. Residues 1427–1474 (PSSTTTNSATSTPTSTPTSTPSTSASTLTPTSTPTSTPVPAPTSLSTP) show a composition bias toward low complexity. A compositionally biased stretch (pro residues) spans 1597 to 1606 (PPATITPILP). The segment covering 1618 to 1637 (SSSSSSSSSSSSSSSSSSSS) has biased composition (low complexity). Polar residues-rich tracts occupy residues 1638–1647 (TTKNNSTTIV) and 1671–1701 (QESN…KTLL). Low complexity-rich tracts occupy residues 1702–1735 (PSNS…NPSS) and 1743–1809 (TSNK…TLKP). Positions 1829-1844 (APTNSTNQNTIPNATT) are enriched in polar residues. Composition is skewed to low complexity over residues 1961–1970 (TTVPGTTTTT) and 2065–2097 (NNMT…QQST). The segment covering 2129–2138 (NTLSGKSPTP) has biased composition (polar residues). Residues 2154–2209 (PSLSSSSANPISITNNTTSLSQQSNTTNTMPSTVSLSSGSTSINSNSSNSKSLRSP) show a composition bias toward low complexity. A compositionally biased stretch (basic and acidic residues) spans 2210–2278 (KSSDNDGKES…NNNDKFDSNK (69 aa)).

The protein is Myb-like protein U (mybU) of Dictyostelium discoideum (Social amoeba).